The primary structure comprises 216 residues: Protein Syd (216 aa).

Belongs to the Syd family.

Its subcellular location is the cell inner membrane. Functionally, interacts with the SecY protein in vivo. May bind preferentially to an uncomplexed state of SecY, thus functioning either as a chelating agent for excess SecY in the cell or as a regulatory factor that negatively controls the translocase function. This Shewanella sp. (strain MR-4) protein is Protein Syd.